A 276-amino-acid chain; its full sequence is NADPH-dependent 7-cyano-7-deazaguanine reductase (276 aa).

A substrate-binding site is contributed by 83–85 (IES). 85-86 (SK) provides a ligand contact to NADPH. Cysteine 184 acts as the Thioimide intermediate in catalysis. The Proton donor role is filled by aspartate 191. 223–224 (HE) lines the substrate pocket. 252–253 (RG) contacts NADPH.

The protein belongs to the GTP cyclohydrolase I family. QueF type 2 subfamily. In terms of assembly, homodimer.

It is found in the cytoplasm. It carries out the reaction 7-aminomethyl-7-carbaguanine + 2 NADP(+) = 7-cyano-7-deazaguanine + 2 NADPH + 3 H(+). It functions in the pathway tRNA modification; tRNA-queuosine biosynthesis. Its function is as follows. Catalyzes the NADPH-dependent reduction of 7-cyano-7-deazaguanine (preQ0) to 7-aminomethyl-7-deazaguanine (preQ1). The polypeptide is NADPH-dependent 7-cyano-7-deazaguanine reductase (Pseudomonas aeruginosa (strain LESB58)).